Reading from the N-terminus, the 369-residue chain is Peptide chain release factor 2 (369 aa).

N5-methylglutamine is present on glutamine 252.

The protein belongs to the prokaryotic/mitochondrial release factor family. Methylated by PrmC. Methylation increases the termination efficiency of RF2.

It is found in the cytoplasm. Its function is as follows. Peptide chain release factor 2 directs the termination of translation in response to the peptide chain termination codons UGA and UAA. In Staphylococcus aureus (strain bovine RF122 / ET3-1), this protein is Peptide chain release factor 2.